The sequence spans 431 residues: Serine/threonine-protein kinase Sgk1 (431 aa).

Residues 1–60 are necessary for localization to the mitochondria; sequence MTVKTEAARDTLTYSRMRGMVAILIAFMKQRRMGLNDFIQKIANNSYACKHPEVQSILKI. The segment at 64 to 92 is disordered; that stretch reads QEPELMNANPSPPPSPSQQINLGPSSNPH. Residue Ser-74 is modified to Phosphoserine. At Ser-78 the chain carries Phosphoserine; by MAPK7. Polar residues predominate over residues 81-91; the sequence is QQINLGPSSNP. Residues 98-355 form the Protein kinase domain; the sequence is FHFLKVIGKG…FMEIKNHVFF (258 aa). ATP contacts are provided by residues 104–112 and Lys-127; that span reads IGKGSFGKV. Positions 131-141 match the Nuclear localization signal motif; sequence KKAILKKKEEK. Asp-222 acts as the Proton acceptor in catalysis. Thr-256 bears the Phosphothreonine; by PDPK1 mark. The region spanning 356–431 is the AGC-kinase C-terminal domain; it reads SLINWEDLIN…SYAPPMDSFL (76 aa). Position 369 is a phosphothreonine; by PKA (Thr-369). Phosphoserine is present on residues Ser-397, Ser-401, and Ser-422.

It belongs to the protein kinase superfamily. AGC Ser/Thr protein kinase family. As to quaternary structure, homodimer; disulfide-linked. Forms a trimeric complex with FBXW7 and NOTCH1. Interacts with MAPK3/ERK1, MAPK1/ERK2, MAP2K1/MEK1, MAP2K2/MEK2, NEDD4, NEDD4L, MAPT/TAU, MAPK7, CREB1, SLC9A3R2/NHERF2 and KCNJ1/ROMK1. Associates with the mammalian target of rapamycin complex 2 (mTORC2) via an interaction with MAPKAP1/SIN1. In terms of processing, regulated by phosphorylation. Activated by phosphorylation on Ser-422 by mTORC2, transforming it into a substrate for PDPK1 which phosphorylates it on Thr-256. Phosphorylation on Ser-397 and Ser-401 are also essential for its activity. Phosphorylation on Ser-78 by MAPK7 is required for growth factor-induced cell cycle progression. Ubiquitinated by NEDD4L; which promotes proteasomal degradation. Ubiquitinated by SYVN1 at the endoplasmic reticulum; which promotes rapid proteasomal degradation and maintains a high turnover rate in resting cells.

The protein localises to the cytoplasm. The protein resides in the nucleus. It localises to the endoplasmic reticulum membrane. It is found in the cell membrane. Its subcellular location is the mitochondrion. It catalyses the reaction L-seryl-[protein] + ATP = O-phospho-L-seryl-[protein] + ADP + H(+). The catalysed reaction is L-threonyl-[protein] + ATP = O-phospho-L-threonyl-[protein] + ADP + H(+). Two specific sites, one in the kinase domain (Thr-256) and the other in the C-terminal regulatory region (Ser-422), need to be phosphorylated for its full activation. Phosphorylation at Ser-397 and Ser-401 are also essential for its activity. Activated by WNK1, WNK2, WNK3 and WNK4; which promote phosphorylation by mTORC2. Its function is as follows. Serine/threonine-protein kinase which is involved in the regulation of a wide variety of ion channels, membrane transporters, cellular enzymes, transcription factors, neuronal excitability, cell growth, proliferation, survival, migration and apoptosis. Plays an important role in cellular stress response. Contributes to regulation of renal Na(+) retention, renal K(+) elimination, salt appetite, gastric acid secretion, intestinal Na(+)/H(+) exchange and nutrient transport, insulin-dependent salt sensitivity of blood pressure, salt sensitivity of peripheral glucose uptake, cardiac repolarization and memory consolidation. Up-regulates Na(+) channels: SCNN1A/ENAC, SCN5A and ASIC1/ACCN2, K(+) channels: KCNJ1/ROMK1, KCNA1-5, KCNQ1-5 and KCNE1, epithelial Ca(2+) channels: TRPV5 and TRPV6, chloride channels: BSND, CLCN2 and CFTR, glutamate transporters: SLC1A3/EAAT1, SLC1A2 /EAAT2, SLC1A1/EAAT3, SLC1A6/EAAT4 and SLC1A7/EAAT5, amino acid transporters: SLC1A5/ASCT2, SLC38A1/SN1 and SLC6A19, creatine transporter: SLC6A8, Na(+)/dicarboxylate cotransporter: SLC13A2/NADC1, Na(+)-dependent phosphate cotransporter: SLC34A2/NAPI-2B, glutamate receptor: GRIK2/GLUR6. Up-regulates carriers: SLC9A3/NHE3, SLC12A1/NKCC2, SLC12A3/NCC, SLC5A3/SMIT, SLC2A1/GLUT1, SLC5A1/SGLT1 and SLC15A2/PEPT2. Regulates enzymes: GSK3A/B, PMM2 and Na(+)/K(+) ATPase, and transcription factors: CTNNB1 and nuclear factor NF-kappa-B. Stimulates sodium transport into epithelial cells by enhancing the stability and expression of SCNN1A/ENAC. This is achieved by phosphorylating the NEDD4L ubiquitin E3 ligase, promoting its interaction with 14-3-3 proteins, thereby preventing it from binding to SCNN1A/ENAC and targeting it for degradation. Regulates store-operated Ca(+2) entry (SOCE) by stimulating ORAI1 and STIM1. Regulates KCNJ1/ROMK1 directly via its phosphorylation or indirectly via increased interaction with SLC9A3R2/NHERF2. Phosphorylates MDM2 and activates MDM2-dependent ubiquitination of p53/TP53. Phosphorylates MAPT/TAU and mediates microtubule depolymerization and neurite formation in hippocampal neurons. Phosphorylates SLC2A4/GLUT4 and up-regulates its activity. Phosphorylates APBB1/FE65 and promotes its localization to the nucleus. Phosphorylates MAPK1/ERK2 and activates it by enhancing its interaction with MAP2K1/MEK1 and MAP2K2/MEK2. Phosphorylates FBXW7 and plays an inhibitory role in the NOTCH1 signaling. Phosphorylates FOXO1 resulting in its relocalization from the nucleus to the cytoplasm. Phosphorylates FOXO3, promoting its exit from the nucleus and interference with FOXO3-dependent transcription. Phosphorylates BRAF and MAP3K3/MEKK3 and inhibits their activity. Phosphorylates SLC9A3/NHE3 in response to dexamethasone, resulting in its activation and increased localization at the cell membrane. Phosphorylates CREB1. Necessary for vascular remodeling during angiogenesis. This Bos taurus (Bovine) protein is Serine/threonine-protein kinase Sgk1 (SGK1).